The following is a 515-amino-acid chain: Bifunctional purine biosynthesis protein PurH (515 aa).

The MGS-like domain maps to M1–V145.

The protein belongs to the PurH family.

It catalyses the reaction (6R)-10-formyltetrahydrofolate + 5-amino-1-(5-phospho-beta-D-ribosyl)imidazole-4-carboxamide = 5-formamido-1-(5-phospho-D-ribosyl)imidazole-4-carboxamide + (6S)-5,6,7,8-tetrahydrofolate. It carries out the reaction IMP + H2O = 5-formamido-1-(5-phospho-D-ribosyl)imidazole-4-carboxamide. It functions in the pathway purine metabolism; IMP biosynthesis via de novo pathway; 5-formamido-1-(5-phospho-D-ribosyl)imidazole-4-carboxamide from 5-amino-1-(5-phospho-D-ribosyl)imidazole-4-carboxamide (10-formyl THF route): step 1/1. The protein operates within purine metabolism; IMP biosynthesis via de novo pathway; IMP from 5-formamido-1-(5-phospho-D-ribosyl)imidazole-4-carboxamide: step 1/1. This chain is Bifunctional purine biosynthesis protein PurH, found in Streptococcus suis.